Reading from the N-terminus, the 84-residue chain is ATP synthase subunit c (84 aa).

A run of 2 helical transmembrane segments spans residues 21-38 (ALGA…IGKI) and 60-80 (MIII…VCLL).

The protein belongs to the ATPase C chain family. In terms of assembly, F-type ATPases have 2 components, F(1) - the catalytic core - and F(0) - the membrane proton channel. F(1) has five subunits: alpha(3), beta(3), gamma(1), delta(1), epsilon(1). F(0) has three main subunits: a(1), b(2) and c(10-14). The alpha and beta chains form an alternating ring which encloses part of the gamma chain. F(1) is attached to F(0) by a central stalk formed by the gamma and epsilon chains, while a peripheral stalk is formed by the delta and b chains.

The protein localises to the cell inner membrane. F(1)F(0) ATP synthase produces ATP from ADP in the presence of a proton or sodium gradient. F-type ATPases consist of two structural domains, F(1) containing the extramembraneous catalytic core and F(0) containing the membrane proton channel, linked together by a central stalk and a peripheral stalk. During catalysis, ATP synthesis in the catalytic domain of F(1) is coupled via a rotary mechanism of the central stalk subunits to proton translocation. Functionally, key component of the F(0) channel; it plays a direct role in translocation across the membrane. A homomeric c-ring of between 10-14 subunits forms the central stalk rotor element with the F(1) delta and epsilon subunits. This chain is ATP synthase subunit c, found in Phocaeicola vulgatus (strain ATCC 8482 / DSM 1447 / JCM 5826 / CCUG 4940 / NBRC 14291 / NCTC 11154) (Bacteroides vulgatus).